Consider the following 223-residue polypeptide: Urease accessory protein UreF (223 aa).

The protein belongs to the UreF family. UreD, UreF and UreG form a complex that acts as a GTP-hydrolysis-dependent molecular chaperone, activating the urease apoprotein by helping to assemble the nickel containing metallocenter of UreC. The UreE protein probably delivers the nickel.

It localises to the cytoplasm. Its function is as follows. Required for maturation of urease via the functional incorporation of the urease nickel metallocenter. In Pseudomonas aeruginosa (strain LESB58), this protein is Urease accessory protein UreF.